The chain runs to 516 residues: Acetylcholine receptor subunit delta (516 aa).

A signal peptide spans 1 to 21; the sequence is MEGSVLTLVLLAALVVCGSWG. The Extracellular segment spans residues 22 to 244; the sequence is LNEEERLIRH…VTFYLIIRRK (223 aa). N-linked (GlcNAc...) asparagine glycosylation is found at Asn96 and Asn163. Cysteines 150 and 164 form a disulfide. Helical transmembrane passes span 245–269, 279–296, and 311–332; these read PLFY…VFYL, MAIS…LISK, and FLLF…VLNI. The Cytoplasmic segment spans residues 333–470; the sequence is HFRTPSTHVL…WNRVARTVDR (138 aa). Phosphotyrosine; by Tyr-kinases is present on Tyr389. Residues 471-493 form a helical membrane-spanning segment; the sequence is LCLFVVTPIMVVGTAWIFLQGAY.

The protein belongs to the ligand-gated ion channel (TC 1.A.9) family. Acetylcholine receptor (TC 1.A.9.1) subfamily. Delta/CHRND sub-subfamily. Pentamer of two alpha chains, and one each of the beta, delta, and gamma (in immature muscle) or epsilon (in mature muscle) chains. The muscle heteropentamer composed of alpha-1, beta-1, delta, epsilon subunits interacts with the alpha-conotoxin ImII.

Its subcellular location is the postsynaptic cell membrane. The protein resides in the cell membrane. The catalysed reaction is K(+)(in) = K(+)(out). It catalyses the reaction Na(+)(in) = Na(+)(out). In terms of biological role, after binding acetylcholine, the AChR responds by an extensive change in conformation that affects all subunits and leads to opening of an ion-conducting channel across the plasma membrane. In Bos taurus (Bovine), this protein is Acetylcholine receptor subunit delta (CHRND).